We begin with the raw amino-acid sequence, 214 residues long: Riboflavin kinase (214 aa).

The segment at 1 to 27 is disordered; that stretch reads MRPDRPRDPVTGPDEGPESPYPIRMSG. Mg(2+) contacts are provided by Thr-44 and Asn-46. The Nucleophile role is filled by Glu-101.

Belongs to the flavokinase family. The cofactor is Zn(2+). Requires Mg(2+) as cofactor.

It carries out the reaction riboflavin + ATP = FMN + ADP + H(+). It functions in the pathway cofactor biosynthesis; FMN biosynthesis; FMN from riboflavin (ATP route): step 1/1. Functionally, catalyzes the phosphorylation of riboflavin (vitamin B2) to form flavin mononucleotide (FMN) coenzyme. The protein is Riboflavin kinase (fmn1) of Aspergillus niger (strain ATCC MYA-4892 / CBS 513.88 / FGSC A1513).